Here is a 42-residue protein sequence, read N- to C-terminus: uncharacterized protein (42 aa).

The protein localises to the plastid. It is found in the chloroplast. This is an uncharacterized protein from Diacronema lutheri (Unicellular marine alga).